Here is a 315-residue protein sequence, read N- to C-terminus: Methylglutaconyl-CoA hydratase, mitochondrial (315 aa).

Residues methionine 1–tyrosine 43 constitute a mitochondrion transit peptide. At lysine 76 the chain carries N6-acetyllysine; alternate. An N6-succinyllysine; alternate modification is found at lysine 76. The interval lysine 81–lysine 95 is RNA-binding. An N6-succinyllysine modification is found at lysine 85. N6-acetyllysine; alternate is present on residues lysine 89 and lysine 120. An N6-succinyllysine; alternate mark is found at lysine 89 and lysine 120. Residues lysine 124 and lysine 136 each carry the N6-succinyllysine modification. N6-acetyllysine; alternate occurs at positions 180 and 187. An N6-succinyllysine; alternate mark is found at lysine 180 and lysine 187. Position 305 is an N6-succinyllysine (lysine 305).

Belongs to the enoyl-CoA hydratase/isomerase family. As to quaternary structure, homohexamer.

The protein localises to the mitochondrion. The enzyme catalyses (3S)-3-hydroxy-3-methylglutaryl-CoA = 3-methyl-(2E)-glutaconyl-CoA + H2O. The catalysed reaction is (3S)-citramalyl-CoA = itaconyl-CoA + H2O. It carries out the reaction 3-hydroxyisovaleryl-CoA = 3-methylbut-2-enoyl-CoA + H2O. It catalyses the reaction (S)-3-hydroxyglutaryl-CoA = (2E)-glutaconyl-CoA + H2O. The protein operates within amino-acid degradation; L-leucine degradation; (S)-3-hydroxy-3-methylglutaryl-CoA from 3-isovaleryl-CoA: step 3/3. Its function is as follows. Catalyzes the fifth step in the leucine degradation pathway, the reversible hydration of 3-methylglutaconyl-CoA (3-MG-CoA) to 3-hydroxy-3-methylglutaryl-CoA (HMG-CoA). Can catalyze the reverse reaction but at a much lower rate in vitro. HMG-CoA is then quickly degraded by another enzyme (such as HMG-CoA lyase) to give acetyl-CoA and acetoacetate. Uses other substrates such as (2E)-glutaconyl-CoA efficiently in vitro, and to a lesser extent 3-methylcrotonyl-CoA (3-methyl-(2E)-butenoyl-CoA), crotonyl-CoA ((2E)-butenoyl-CoA) and 3-hydroxybutanoyl-CoA (the missing carboxylate reduces affinity to the active site). Originally it was identified as an RNA-binding protein as it binds to AU-rich elements (AREs) in vitro. AREs direct rapid RNA degradation and mRNA deadenylation. Might have itaconyl-CoA hydratase activity, converting itaconyl-CoA into citramalyl-CoA in the C5-dicarboxylate catabolism pathway. The C5-dicarboxylate catabolism pathway is required to detoxify itaconate, an antimicrobial metabolite and immunomodulator produced by macrophages during certain infections, that can act as a vitamin B12-poisoning metabolite. The chain is Methylglutaconyl-CoA hydratase, mitochondrial from Rattus norvegicus (Rat).